The primary structure comprises 326 residues: 4-hydroxythreonine-4-phosphate dehydrogenase (326 aa).

2 residues coordinate substrate: His132 and Thr133. A divalent metal cation-binding residues include His162, His207, and His262. The substrate site is built by Lys270, Asn279, and Arg288.

Belongs to the PdxA family. As to quaternary structure, homodimer. Zn(2+) is required as a cofactor. The cofactor is Mg(2+). It depends on Co(2+) as a cofactor.

Its subcellular location is the cytoplasm. The enzyme catalyses 4-(phosphooxy)-L-threonine + NAD(+) = 3-amino-2-oxopropyl phosphate + CO2 + NADH. Its pathway is cofactor biosynthesis; pyridoxine 5'-phosphate biosynthesis; pyridoxine 5'-phosphate from D-erythrose 4-phosphate: step 4/5. Catalyzes the NAD(P)-dependent oxidation of 4-(phosphooxy)-L-threonine (HTP) into 2-amino-3-oxo-4-(phosphooxy)butyric acid which spontaneously decarboxylates to form 3-amino-2-oxopropyl phosphate (AHAP). The sequence is that of 4-hydroxythreonine-4-phosphate dehydrogenase from Ruegeria sp. (strain TM1040) (Silicibacter sp.).